Reading from the N-terminus, the 199-residue chain is MVGKALGLEFNKKIINTLKGEQMNPDFIKINPQHSIPTLVDNGFTIWESRAILVYLVEKYGKDDALYPKDIQKQAVINQRLYFDMALMYPTLANYYYKAFTTGQFGSEEDYKKVQETFDFLNTFLEGQDYVAGDQYTVADIAILANVSNFDVVGFDISKYPNVARWYDHVKKITPGWEENWAGALDVKKRIEEKQNAAK.

Positions 1-64 (MVGKALGLEF…YLVEKYGKDD (64 aa)) constitute a GST N-terminal domain. Glutathione-binding positions include 34–36 (HSI) and 48–50 (ESR). In terms of domain architecture, GST C-terminal spans 70–199 (DIQKQAVINQ…RIEEKQNAAK (130 aa)).

This sequence belongs to the GST superfamily. Delta family. As to quaternary structure, homodimer.

In terms of biological role, has no glutathione S-transferase activity. The chain is Inactive glutathione S-transferase D3 from Drosophila melanogaster (Fruit fly).